The primary structure comprises 279 residues: Bifunctional protein FolD (279 aa).

Residues 162–164 (GRS), Ser187, and Ile228 each bind NADP(+).

The protein belongs to the tetrahydrofolate dehydrogenase/cyclohydrolase family. Homodimer.

It carries out the reaction (6R)-5,10-methylene-5,6,7,8-tetrahydrofolate + NADP(+) = (6R)-5,10-methenyltetrahydrofolate + NADPH. It catalyses the reaction (6R)-5,10-methenyltetrahydrofolate + H2O = (6R)-10-formyltetrahydrofolate + H(+). Its pathway is one-carbon metabolism; tetrahydrofolate interconversion. Catalyzes the oxidation of 5,10-methylenetetrahydrofolate to 5,10-methenyltetrahydrofolate and then the hydrolysis of 5,10-methenyltetrahydrofolate to 10-formyltetrahydrofolate. The protein is Bifunctional protein FolD of Acidiphilium cryptum (strain JF-5).